A 139-amino-acid polypeptide reads, in one-letter code: Peptide methionine sulfoxide reductase MsrB (139 aa).

In terms of domain architecture, MsrB spans Glu-17–Lys-139. The Zn(2+) site is built by Cys-56, Cys-59, Cys-105, and Cys-108. Catalysis depends on Cys-128, which acts as the Nucleophile.

This sequence belongs to the MsrB Met sulfoxide reductase family. Requires Zn(2+) as cofactor.

It catalyses the reaction L-methionyl-[protein] + [thioredoxin]-disulfide + H2O = L-methionyl-(R)-S-oxide-[protein] + [thioredoxin]-dithiol. This chain is Peptide methionine sulfoxide reductase MsrB, found in Bradyrhizobium diazoefficiens (strain JCM 10833 / BCRC 13528 / IAM 13628 / NBRC 14792 / USDA 110).